A 182-amino-acid polypeptide reads, in one-letter code: MGVEKMVCLASRTGRQFQRYNKGRRQVVGCVPYRFKLSNDGKISDEVEVLVISSQKGHALMFPKGGWELDESVEEAASRECLEEAGVLGNVEHQLGKWDFLSKSRGTYYEGLMFPMLVTEQLELWPEQHVRQRIWMNVTEAREACRDWWMKEALDVLVERLSSPMNQPKEEKTMSISIETMC.

A mitochondrion-targeting transit peptide spans Met-1–Gln-26. The Nudix hydrolase domain occupies Val-27–Val-158. The Nudix box signature appears at Gly-65–Gly-86. Residues Glu-80 and Glu-84 each coordinate Mg(2+).

Belongs to the Nudix hydrolase family. Mg(2+) serves as cofactor. It depends on Mn(2+) as a cofactor. As to expression, expressed in roots, leaves, stems and inflorescences.

It is found in the mitochondrion. Functionally, probably mediates the hydrolysis of some nucleoside diphosphate derivatives. The chain is Nudix hydrolase 17, mitochondrial (NUDT17) from Arabidopsis thaliana (Mouse-ear cress).